We begin with the raw amino-acid sequence, 418 residues long: Trans-acting enoyl reductase (418 aa).

This sequence belongs to the saccharopine dehydrogenase family. Enoyl reductase subfamily.

Functionally, involved in the reduction of the double bond between C-4 and C-5 during phthiocerol dimycocerosates (DIM A) and glycosylated phenolphthiocerol dimycocerosates (PGL) biosynthesis. This Mycobacterium tuberculosis (strain ATCC 25177 / H37Ra) protein is Trans-acting enoyl reductase.